The primary structure comprises 187 residues: Elongation factor P (187 aa).

The protein belongs to the elongation factor P family.

The protein localises to the cytoplasm. Its pathway is protein biosynthesis; polypeptide chain elongation. Its function is as follows. Involved in peptide bond synthesis. Stimulates efficient translation and peptide-bond synthesis on native or reconstituted 70S ribosomes in vitro. Probably functions indirectly by altering the affinity of the ribosome for aminoacyl-tRNA, thus increasing their reactivity as acceptors for peptidyl transferase. The sequence is that of Elongation factor P from Parafrankia sp. (strain EAN1pec).